We begin with the raw amino-acid sequence, 260 residues long: MAFVPPQAGYDRAITVFSPDGRLFQVNYAREAVKRGATAVGVKWKGGVVLAVEKRITSRLIEPSSYEKIFQIDDHIAAAPSGIIADARVLVDRARLEAQIYRLTYGEPVPLTVLVKKICDLKQAHTQYGGVRPFGAALLMAGVNEKPELYETDPSGAYFEWKAVAIGSGRNTAMAIFEEHYSDDIDMEGAIKLAILALAKTLEEPSPESIEVAYITLDEKRWKKLDKEEVAKYLNEILEEIKEEEVEEREEDYSELDQNY.

It belongs to the peptidase T1A family. The 20S proteasome core is composed of 14 alpha and 14 beta subunits that assemble into four stacked heptameric rings, resulting in a barrel-shaped structure. The two inner rings, each composed of seven catalytic beta subunits, are sandwiched by two outer rings, each composed of seven alpha subunits. The catalytic chamber with the active sites is on the inside of the barrel. Has a gated structure, the ends of the cylinder being occluded by the N-termini of the alpha-subunits. Is capped at one or both ends by the proteasome regulatory ATPase, PAN.

Its subcellular location is the cytoplasm. With respect to regulation, the formation of the proteasomal ATPase PAN-20S proteasome complex, via the docking of the C-termini of PAN into the intersubunit pockets in the alpha-rings, triggers opening of the gate for substrate entry. Interconversion between the open-gate and close-gate conformations leads to a dynamic regulation of the 20S proteasome proteolysis activity. Functionally, component of the proteasome core, a large protease complex with broad specificity involved in protein degradation. This is Proteasome subunit alpha from Thermococcus gammatolerans (strain DSM 15229 / JCM 11827 / EJ3).